Reading from the N-terminus, the 213-residue chain is Thymidylate kinase (213 aa).

10 to 17 serves as a coordination point for ATP; that stretch reads GIDGCGKT.

It belongs to the thymidylate kinase family.

It carries out the reaction dTMP + ATP = dTDP + ADP. Its function is as follows. Phosphorylation of dTMP to form dTDP in both de novo and salvage pathways of dTTP synthesis. This Synechococcus sp. (strain WH7803) protein is Thymidylate kinase.